The chain runs to 125 residues: Photosystem I reaction center subunit IV, chloroplastic (125 aa).

The transit peptide at 1-34 (MASIASSVAVRLGLTQVLPNKNFSSPRSTRLVVR) directs the protein to the chloroplast. The segment covering 42 to 57 (APAAASPEGEAPKAAA) has biased composition (low complexity). The segment at 42 to 68 (APAAASPEGEAPKAAAKPPPIGPKRGS) is disordered.

It belongs to the PsaE family.

The protein localises to the plastid. It localises to the chloroplast thylakoid membrane. Its function is as follows. Stabilizes the interaction between PsaC and the PSI core, assists the docking of the ferredoxin to PSI and interacts with ferredoxin-NADP oxidoreductase. The chain is Photosystem I reaction center subunit IV, chloroplastic (PSAE-1) from Spinacia oleracea (Spinach).